We begin with the raw amino-acid sequence, 442 residues long: tRNA modification GTPase MnmE (442 aa).

The (6S)-5-formyl-5,6,7,8-tetrahydrofolate site is built by Arg22, Glu79, and Lys119. The TrmE-type G domain maps to 216-366; it reads GIKTCLVGAP…LLEKIKSIFA (151 aa). A K(+)-binding site is contributed by Asn226. GTP contacts are provided by residues 226–231, 245–251, and 270–273; these read NSGKSS, SEIPGTT, and DTAG. Position 230 (Ser230) interacts with Mg(2+). Residues Ser245, Ile247, and Thr250 each contribute to the K(+) site. A Mg(2+)-binding site is contributed by Thr251. Lys442 contributes to the (6S)-5-formyl-5,6,7,8-tetrahydrofolate binding site.

This sequence belongs to the TRAFAC class TrmE-Era-EngA-EngB-Septin-like GTPase superfamily. TrmE GTPase family. Homodimer. Heterotetramer of two MnmE and two MnmG subunits. It depends on K(+) as a cofactor.

It is found in the cytoplasm. In terms of biological role, exhibits a very high intrinsic GTPase hydrolysis rate. Involved in the addition of a carboxymethylaminomethyl (cmnm) group at the wobble position (U34) of certain tRNAs, forming tRNA-cmnm(5)s(2)U34. This is tRNA modification GTPase MnmE from Mesomycoplasma hyopneumoniae (strain 7448) (Mycoplasma hyopneumoniae).